The following is a 619-amino-acid chain: MLLSWLTGLGAGLLSLHFLQKLLFPYFWDDFWYLLKVVRYGIQMEMYKLRGELVTVLDKFLSHTRKQPRKAFIIYEGDVYTYEDVDKRSNRIAHALLNHSSLKRGDVVALLMSNEPDFVHVWFGLAKLGCVVAFLNSNLRFDSLLHCINTCEPTAVVVGGDLLGSIEEILPSLPKHVRVWGMKDSVPEGIDSLQEKLSLASDEPVPPSHHVTSSLKSTCLYIFTSGTTGLPKAAVISQLQVLKGSVGLWAFGCTADDIIYITLPLYHSSGSLLGIGGCVELGATCVLKKKFSASQFWNDCKKYNVTVFQYIGELCRYLCKQPQREGEKDHRVRLAVGNGLSSDVWRQFLDRFGNIKMCELYGATEGNIVFMNHTGKIGSVGRANFFYSLFFSFELIKYDFQKDEPWRNGQGWCSCVRKGEPGLLISRVNKKNPFFGYAGSDTHTKSKLLFDVFRKGDVYFNTGDLMFQDQENFVYFWDRLGDTFRWKGENVATTEVADVLGRLDFIQEANVYGVRVPGYEGKAGMTSVILKPNKSLDLEKMYNQVVTSLPAYACPLFLRIQDKMETTGTFKLKKLQLVEEGFDPLKISDPLYFMDNLKKSYVPLTEEIYNQIMSEEVKL.

Transmembrane regions (helical) follow at residues 22–42 and 119–139; these read LLFP…RYGI and VHVW…NSNL. Position 221–232 (221–232) interacts with AMP; sequence YIFTSGTTGLPK.

It belongs to the ATP-dependent AMP-binding enzyme family.

Its subcellular location is the cell membrane. The protein resides in the sarcolemma. The enzyme catalyses a fatty acid(in) = a fatty acid(out). The catalysed reaction is hexadecanoate(out) = hexadecanoate(in). It catalyses the reaction (9Z,12Z)-octadecadienoate(out) = (9Z,12Z)-octadecadienoate(in). It carries out the reaction (9Z)-octadecenoate(out) = (9Z)-octadecenoate(in). The enzyme catalyses a very long-chain fatty acid + ATP + CoA = a very long-chain fatty acyl-CoA + AMP + diphosphate. The catalysed reaction is tetracosanoate + ATP + CoA = tetracosanoyl-CoA + AMP + diphosphate. It catalyses the reaction a long-chain fatty acid + ATP + CoA = a long-chain fatty acyl-CoA + AMP + diphosphate. It carries out the reaction (9Z)-octadecenoate + ATP + CoA = (9Z)-octadecenoyl-CoA + AMP + diphosphate. The enzyme catalyses (5Z,8Z,11Z,14Z)-eicosatetraenoate + ATP + CoA = (5Z,8Z,11Z,14Z)-eicosatetraenoyl-CoA + AMP + diphosphate. Mediates the import of long-chain fatty acids (LCFA) into the cell by facilitating their transport at the plasma membrane. Also functions as an acyl-CoA ligase catalyzing the ATP-dependent formation of fatty acyl-CoA using LCFA and very-long-chain fatty acids (VLCFA) as substrates. Plays a pivotal role in regulating available LCFA substrates from exogenous sources in tissues undergoing high levels of beta-oxidation such as the heart. This Mus musculus (Mouse) protein is Long-chain fatty acid transport protein 6 (Slc27a6).